The following is a 555-amino-acid chain: Membrane protein insertase YidC (555 aa).

5 consecutive transmembrane segments (helical) span residues 7–24 (VLWV…DNWQ), 367–387 (WGWS…PLSA), 437–457 (LPVV…LASV), 476–496 (PFFI…SLNP), and 511–531 (PIAF…YYVV).

It belongs to the OXA1/ALB3/YidC family. Type 1 subfamily. As to quaternary structure, interacts with the Sec translocase complex via SecD. Specifically interacts with transmembrane segments of nascent integral membrane proteins during membrane integration.

The protein localises to the cell inner membrane. Its function is as follows. Required for the insertion and/or proper folding and/or complex formation of integral membrane proteins into the membrane. Involved in integration of membrane proteins that insert both dependently and independently of the Sec translocase complex, as well as at least some lipoproteins. Aids folding of multispanning membrane proteins. The protein is Membrane protein insertase YidC of Burkholderia lata (strain ATCC 17760 / DSM 23089 / LMG 22485 / NCIMB 9086 / R18194 / 383).